The sequence spans 552 residues: Beta-hexosaminidase A (552 aa).

An N-terminal signal peptide occupies residues 1–15 (MRLIVLSLLFTSTLA). An N-linked (GlcNAc...) asparagine glycan is attached at asparagine 44. The Proton donor role is filled by glutamate 322. N-linked (GlcNAc...) asparagine glycans are attached at residues asparagine 348, asparagine 409, and asparagine 457.

Belongs to the glycosyl hydrolase 20 family.

The protein resides in the lysosome. It carries out the reaction Hydrolysis of terminal non-reducing N-acetyl-D-hexosamine residues in N-acetyl-beta-D-hexosaminides.. In terms of biological role, responsible for the degradation of GM2 gangliosides, and a variety of other molecules containing terminal N-acetyl hexosamines. Degrades chitotriose. The polypeptide is Beta-hexosaminidase A (Caenorhabditis briggsae).